The sequence spans 116 residues: Ribosome-binding factor A (116 aa).

It belongs to the RbfA family. As to quaternary structure, monomer. Binds 30S ribosomal subunits, but not 50S ribosomal subunits or 70S ribosomes.

Its subcellular location is the cytoplasm. Its function is as follows. One of several proteins that assist in the late maturation steps of the functional core of the 30S ribosomal subunit. Associates with free 30S ribosomal subunits (but not with 30S subunits that are part of 70S ribosomes or polysomes). Required for efficient processing of 16S rRNA. May interact with the 5'-terminal helix region of 16S rRNA. This is Ribosome-binding factor A from Streptococcus equi subsp. zooepidemicus (strain H70).